A 37-amino-acid polypeptide reads, in one-letter code: Large ribosomal subunit protein bL36 (37 aa).

The protein belongs to the bacterial ribosomal protein bL36 family.

The protein is Large ribosomal subunit protein bL36 of Leptothrix cholodnii (strain ATCC 51168 / LMG 8142 / SP-6) (Leptothrix discophora (strain SP-6)).